The chain runs to 199 residues: ATP-dependent Clp protease proteolytic subunit (199 aa).

Catalysis depends on Ser99, which acts as the Nucleophile. His124 is an active-site residue.

This sequence belongs to the peptidase S14 family. Fourteen ClpP subunits assemble into 2 heptameric rings which stack back to back to give a disk-like structure with a central cavity, resembling the structure of eukaryotic proteasomes.

The protein resides in the cytoplasm. The enzyme catalyses Hydrolysis of proteins to small peptides in the presence of ATP and magnesium. alpha-casein is the usual test substrate. In the absence of ATP, only oligopeptides shorter than five residues are hydrolyzed (such as succinyl-Leu-Tyr-|-NHMec, and Leu-Tyr-Leu-|-Tyr-Trp, in which cleavage of the -Tyr-|-Leu- and -Tyr-|-Trp bonds also occurs).. Cleaves peptides in various proteins in a process that requires ATP hydrolysis. Has a chymotrypsin-like activity. Plays a major role in the degradation of misfolded proteins. This chain is ATP-dependent Clp protease proteolytic subunit, found in Moorella thermoacetica (strain ATCC 39073 / JCM 9320).